The chain runs to 122 residues: Large ribosomal subunit protein uL14 (122 aa).

Belongs to the universal ribosomal protein uL14 family. Part of the 50S ribosomal subunit. Forms a cluster with proteins L3 and L19. In the 70S ribosome, L14 and L19 interact and together make contacts with the 16S rRNA in bridges B5 and B8.

Binds to 23S rRNA. Forms part of two intersubunit bridges in the 70S ribosome. This chain is Large ribosomal subunit protein uL14, found in Rickettsia bellii (strain OSU 85-389).